Consider the following 246-residue polypeptide: tRNA pseudouridine synthase A (246 aa).

Catalysis depends on D53, which acts as the Nucleophile. Y111 is a binding site for substrate.

Belongs to the tRNA pseudouridine synthase TruA family. In terms of assembly, homodimer.

It catalyses the reaction uridine(38/39/40) in tRNA = pseudouridine(38/39/40) in tRNA. Its function is as follows. Formation of pseudouridine at positions 38, 39 and 40 in the anticodon stem and loop of transfer RNAs. The polypeptide is tRNA pseudouridine synthase A (Lysinibacillus sphaericus (strain C3-41)).